Here is a 160-residue protein sequence, read N- to C-terminus: Bacterial microcompartment shell protein PduK (160 aa).

A BMC domain is found at 11-96; sequence SLGLLEVCGL…PGEGILLAET (86 aa).

This sequence belongs to the bacterial microcompartments protein family. In terms of assembly, interacts with shell proteins PduA and PduP and assembly protein PduM. It depends on Fe cation as a cofactor.

It localises to the bacterial microcompartment. The protein operates within polyol metabolism; 1,2-propanediol degradation. Functionally, a minor shell protein of the bacterial microcompartment (BMC) dedicated to 1,2-propanediol (1,2-PD) degradation. The isolated BMC shell component protein ratio for J:A:B':B:K:T:U is approximately 15:10:7:6:1:1:2. Not required for structural integrity of BMCs nor to mitigate propionaldehyde toxicity, it might be involved in spatial organization of BMCs. The 1,2-PD-specific bacterial microcompartment (BMC) concentrates low levels of 1,2-PD catabolic enzymes, concentrates volatile reaction intermediates thus enhancing pathway flux and keeps the level of toxic, mutagenic propionaldehyde low. This chain is Bacterial microcompartment shell protein PduK, found in Salmonella typhimurium (strain LT2 / SGSC1412 / ATCC 700720).